The primary structure comprises 389 residues: Carbamoyl phosphate synthase small chain (389 aa).

A CPSase region spans residues 1–199 (MFNPAILVLA…AGKPFNLQTT (199 aa)). L-glutamine is bound by residues Ser50, Gly251, and Gly253. Positions 203–389 (HVVAYDFGIK…FINAVQATKA (187 aa)) constitute a Glutamine amidotransferase type-1 domain. Cys279 acts as the Nucleophile in catalysis. Residues Leu280, Gln283, Asn321, Gly323, and Phe324 each coordinate L-glutamine. Residues His363 and Glu365 contribute to the active site.

This sequence belongs to the CarA family. As to quaternary structure, composed of two chains; the small (or glutamine) chain promotes the hydrolysis of glutamine to ammonia, which is used by the large (or ammonia) chain to synthesize carbamoyl phosphate. Tetramer of heterodimers (alpha,beta)4.

It carries out the reaction hydrogencarbonate + L-glutamine + 2 ATP + H2O = carbamoyl phosphate + L-glutamate + 2 ADP + phosphate + 2 H(+). The enzyme catalyses L-glutamine + H2O = L-glutamate + NH4(+). The protein operates within amino-acid biosynthesis; L-arginine biosynthesis; carbamoyl phosphate from bicarbonate: step 1/1. It participates in pyrimidine metabolism; UMP biosynthesis via de novo pathway; (S)-dihydroorotate from bicarbonate: step 1/3. Small subunit of the glutamine-dependent carbamoyl phosphate synthetase (CPSase). CPSase catalyzes the formation of carbamoyl phosphate from the ammonia moiety of glutamine, carbonate, and phosphate donated by ATP, constituting the first step of 2 biosynthetic pathways, one leading to arginine and/or urea and the other to pyrimidine nucleotides. The small subunit (glutamine amidotransferase) binds and cleaves glutamine to supply the large subunit with the substrate ammonia. This is Carbamoyl phosphate synthase small chain from Haemophilus ducreyi (strain 35000HP / ATCC 700724).